Consider the following 263-residue polypeptide: Phosphatidylglycerol--prolipoprotein diacylglyceryl transferase (263 aa).

4 consecutive transmembrane segments (helical) span residues 6–26, 50–70, 85–105, and 112–132; these read VIFSIGPVSIYWYSLAYVLGI, LLTATIVGIILGGRLGYVLIY, TWEGGMSFHGGAIGVLLAVII, and IPTFYALDLVSCGVPIGLFLG. A 1,2-diacyl-sn-glycero-3-phospho-(1'-sn-glycerol) is bound at residue Arg133. 3 consecutive transmembrane segments (helical) span residues 169 to 189, 197 to 217, and 233 to 253; these read LYEALFEGLLLFAVANSLFFL, GALTGIAVMWYGIARFFVEFF, and MGQLLSIPMVLLGMLVYLGAL.

This sequence belongs to the Lgt family.

The protein localises to the cell membrane. The catalysed reaction is L-cysteinyl-[prolipoprotein] + a 1,2-diacyl-sn-glycero-3-phospho-(1'-sn-glycerol) = an S-1,2-diacyl-sn-glyceryl-L-cysteinyl-[prolipoprotein] + sn-glycerol 1-phosphate + H(+). The protein operates within protein modification; lipoprotein biosynthesis (diacylglyceryl transfer). Its function is as follows. Catalyzes the transfer of the diacylglyceryl group from phosphatidylglycerol to the sulfhydryl group of the N-terminal cysteine of a prolipoprotein, the first step in the formation of mature lipoproteins. The protein is Phosphatidylglycerol--prolipoprotein diacylglyceryl transferase of Wolbachia pipientis wMel.